We begin with the raw amino-acid sequence, 1178 residues long: Pesticidal crystal protein Cry1Ac (1178 aa).

The protein belongs to the delta endotoxin family.

Promotes colloidosmotic lysis by binding to the midgut epithelial cells of many lepidopteran larvae. This chain is Pesticidal crystal protein Cry1Ac (cry1Ac), found in Bacillus thuringiensis subsp. kurstaki.